Here is a 265-residue protein sequence, read N- to C-terminus: Indole-3-glycerol phosphate synthase (265 aa).

It belongs to the TrpC family.

The catalysed reaction is 1-(2-carboxyphenylamino)-1-deoxy-D-ribulose 5-phosphate + H(+) = (1S,2R)-1-C-(indol-3-yl)glycerol 3-phosphate + CO2 + H2O. Its pathway is amino-acid biosynthesis; L-tryptophan biosynthesis; L-tryptophan from chorismate: step 4/5. The polypeptide is Indole-3-glycerol phosphate synthase (Desulforamulus reducens (strain ATCC BAA-1160 / DSM 100696 / MI-1) (Desulfotomaculum reducens)).